A 254-amino-acid chain; its full sequence is Zinc finger FYVE domain-containing protein 21 (254 aa).

The FYVE-type zinc finger occupies 44 to 104 (DKECPRCMQC…QCAGCAPVSR (61 aa)). Cys-50, Cys-53, Cys-66, Cys-69, Cys-74, Cys-77, Cys-96, and Cys-99 together coordinate Zn(2+). The PH-like stretch occupies residues 107–254 (ADFYDRQLKL…AKLLYESRDQ (148 aa)).

In terms of assembly, interacts with PTK2/FAK1.

Its subcellular location is the cell junction. It is found in the focal adhesion. The protein resides in the cytoplasmic vesicle. It localises to the endosome. Functionally, plays a role in cell adhesion, and thereby in cell motility which requires repeated formation and disassembly of focal adhesions. Regulates microtubule-induced PTK2/FAK1 dephosphorylation, an event important for focal adhesion disassembly, as well as integrin beta-1/ITGB1 cell surface expression. The polypeptide is Zinc finger FYVE domain-containing protein 21 (ZFYVE21) (Bos taurus (Bovine)).